The sequence spans 273 residues: Large ribosomal subunit protein uL2 (273 aa).

A disordered region spans residues 228 to 273 (VDHPHGGGEGKTSGGRHPVTPWGFPTKGKKTRKNKRTSKFIVKKRK). A compositionally biased stretch (basic residues) spans 254–273 (KGKKTRKNKRTSKFIVKKRK).

This sequence belongs to the universal ribosomal protein uL2 family. Part of the 50S ribosomal subunit. Forms a bridge to the 30S subunit in the 70S ribosome.

Functionally, one of the primary rRNA binding proteins. Required for association of the 30S and 50S subunits to form the 70S ribosome, for tRNA binding and peptide bond formation. It has been suggested to have peptidyltransferase activity; this is somewhat controversial. Makes several contacts with the 16S rRNA in the 70S ribosome. This is Large ribosomal subunit protein uL2 from Rickettsia felis (strain ATCC VR-1525 / URRWXCal2) (Rickettsia azadi).